The primary structure comprises 520 residues: Bifunctional purine biosynthesis protein PurH (520 aa).

The 150-residue stretch at 1–150 folds into the MGS-like domain; that stretch reads MSDDRKAIKR…KNHPSVAVVV (150 aa).

Belongs to the PurH family.

It carries out the reaction (6R)-10-formyltetrahydrofolate + 5-amino-1-(5-phospho-beta-D-ribosyl)imidazole-4-carboxamide = 5-formamido-1-(5-phospho-D-ribosyl)imidazole-4-carboxamide + (6S)-5,6,7,8-tetrahydrofolate. The enzyme catalyses IMP + H2O = 5-formamido-1-(5-phospho-D-ribosyl)imidazole-4-carboxamide. The protein operates within purine metabolism; IMP biosynthesis via de novo pathway; 5-formamido-1-(5-phospho-D-ribosyl)imidazole-4-carboxamide from 5-amino-1-(5-phospho-D-ribosyl)imidazole-4-carboxamide (10-formyl THF route): step 1/1. It participates in purine metabolism; IMP biosynthesis via de novo pathway; IMP from 5-formamido-1-(5-phospho-D-ribosyl)imidazole-4-carboxamide: step 1/1. The chain is Bifunctional purine biosynthesis protein PurH from Corynebacterium glutamicum (strain ATCC 13032 / DSM 20300 / JCM 1318 / BCRC 11384 / CCUG 27702 / LMG 3730 / NBRC 12168 / NCIMB 10025 / NRRL B-2784 / 534).